The sequence spans 202 residues: LexA repressor (202 aa).

A DNA-binding region (H-T-H motif) is located at residues 28–48; sequence IAEIARAIGVSSPHGVREQLR. Residues Ser120 and Lys157 each act as for autocatalytic cleavage activity in the active site.

It belongs to the peptidase S24 family. As to quaternary structure, homodimer.

The enzyme catalyses Hydrolysis of Ala-|-Gly bond in repressor LexA.. Functionally, represses a number of genes involved in the response to DNA damage (SOS response), including recA and lexA. In the presence of single-stranded DNA, RecA interacts with LexA causing an autocatalytic cleavage which disrupts the DNA-binding part of LexA, leading to derepression of the SOS regulon and eventually DNA repair. The polypeptide is LexA repressor (Methylococcus capsulatus (strain ATCC 33009 / NCIMB 11132 / Bath)).